Consider the following 269-residue polypeptide: Ice-binding protein (269 aa).

The first 24 residues, 1-24 (MLKINRKYAIILAIVAFSSFQTEA), serve as a signal peptide directing secretion. Short sequence motifs (probable ice-binding motif (T/S-X-T)) lie at residues 45–47 (TVT), 65–67 (SAT), 128–130 (SAQ), 154–156 (TLT), 180–182 (SAT), 198–200 (SIT), and 218–220 (AVT). The tract at residues 240 to 263 (VPEPDSSLAVLGSGLVSLLFAFRK) is PEP C-terminal anchor. A helical membrane pass occupies residues 245-261 (SSLAVLGSGLVSLLFAF).

The protein belongs to the ice-binding protein family.

It localises to the cell outer membrane. A probable ice-binding protein that has ice-structuring activities in vitro. Thought not to anchor the cyanobacterium to ice surfaces, as its habitat is shallow puddles fed by glacier meltwater. The protein is Ice-binding protein of Nostoc sp. (strain HG1).